The primary structure comprises 340 residues: Putative transport protein AF_1800 (340 aa).

7 helical membrane passes run 7–27 (LVLL…FTPL), 57–77 (SVIA…YGLI), 140–160 (TLLI…LADM), 193–213 (LWFG…PFFL), 225–245 (GLMF…ILPV), 260–280 (FLLI…RPYF), and 290–310 (LVLM…GFFI).

This sequence belongs to the autoinducer-2 exporter (AI-2E) (TC 2.A.86) family.

It is found in the cell membrane. The protein is Putative transport protein AF_1800 of Archaeoglobus fulgidus (strain ATCC 49558 / DSM 4304 / JCM 9628 / NBRC 100126 / VC-16).